The chain runs to 252 residues: MFS-type transporter cctQ (252 aa).

2 consecutive transmembrane segments (helical) span residues 54-74 (IGSL…VVLP) and 116-136 (FGSF…IVGF). An N-linked (GlcNAc...) asparagine glycan is attached at asparagine 179. A run of 2 helical transmembrane segments spans residues 180 to 200 (FSIC…WILA) and 208 to 228 (FLVW…YFTT).

The protein belongs to the major facilitator superfamily.

It localises to the membrane. The protein operates within mycotoxin biosynthesis. Functionally, MFS-type transporter; part of the gene cluster that mediates the biosynthesis of the mycotoxin cyclochlorotine, a hepatotoxic and carcinogenic cyclic chlorinated pentapeptide. Most likely responsible for cyclochlorotine secretion and thereby may contribute to intrinsic resistance. This chain is MFS-type transporter cctQ, found in Talaromyces islandicus (Penicillium islandicum).